Here is a 119-residue protein sequence, read N- to C-terminus: Small ribosomal subunit protein bS6 (119 aa).

Belongs to the bacterial ribosomal protein bS6 family.

Binds together with bS18 to 16S ribosomal RNA. The chain is Small ribosomal subunit protein bS6 from Thermosipho africanus (strain TCF52B).